Here is a 70-residue protein sequence, read N- to C-terminus: Guanine nucleotide-binding protein G(I)/G(S)/G(O) subunit gamma-8 (70 aa).

Cysteine 67 carries the cysteine methyl ester modification. A lipid anchor (S-geranylgeranyl cysteine) is attached at cysteine 67. The propeptide at 68–70 (TLL) is removed in mature form.

This sequence belongs to the G protein gamma family. G proteins are composed of 3 units, alpha, beta and gamma. As to expression, detected in the olfactory epithelium, the vomeronasal epithelium and, to a lesser extent, the olfactory bulb.

The protein resides in the cell membrane. In terms of biological role, guanine nucleotide-binding proteins (G proteins) are involved as a modulator or transducer in various transmembrane signaling systems. The beta and gamma chains are required for the GTPase activity, for replacement of GDP by GTP, and for G protein-effector interaction. This subunit may have a very specific role in the development and turnover of olfactory and vomeronasal neurons. The polypeptide is Guanine nucleotide-binding protein G(I)/G(S)/G(O) subunit gamma-8 (Gng8) (Rattus norvegicus (Rat)).